We begin with the raw amino-acid sequence, 707 residues long: Zinc finger CCHC domain-containing protein 8 (707 aa).

Position 2 is an N-acetylalanine (A2). The tract at residues 16–44 (FDHPEESIPKPVHTRFKDDDGDEEDENGV) is disordered. Over residues 34–43 (DDGDEEDENG) the composition is skewed to acidic residues. Positions 45 to 80 (GDAELRERLRQCEETIEQLRAENQELKRKLNILTRP) form a coiled coil. A CCHC-type zinc finger spans residues 227-244 (PHCFNCGSEEHQMKDCPM). RBM7 binding stretches follow at residues 286–299 (FKPGVISEELQDAL) and 309–324 (FIYRMRQLGYPPGWLK). Position 342 is a phosphothreonine (T342). Disordered stretches follow at residues 409–518 (APGV…LTLE), 531–607 (LEQA…TSLC), and 641–660 (QKLFPADTSPSTATKIHSPI). K413 is covalently cross-linked (Glycyl lysine isopeptide (Lys-Gly) (interchain with G-Cter in SUMO2)). Low complexity predominate over residues 456–465 (SQSSESFQFQ). Residues 466 to 496 (PPLPPDTPPLPRGTPPPVFTPPLPKGTPPLT) show a composition bias toward pro residues. Phosphothreonine is present on residues T472, T479, and T485. The residue at position 492 (T492) is a Phosphothreonine; by GSK3. Residues 516-539 (TLEELEEQQRRIWAALEQAESVNS) are a coiled coil. Residues 549–559 (LTGNSVASSPC) are compositionally biased toward polar residues. T577 carries the phosphothreonine modification. S598 carries the post-translational modification Phosphoserine. Polar residues predominate over residues 598-607 (SPDSEVTSLC). T648 bears the Phosphothreonine mark. Residues S649, S658, and S695 each carry the phosphoserine modification. Residues 659 to 707 (PIPDMSKFATGITPFEFENMAESTGMYLRIRSLLKNSPRNQQKNKKASE) are MTREX binding.

Belongs to the ZCCHC8 family. As to quaternary structure, component of a nuclear TRAMP-like complex, an ATP-dependent exosome regulatory complex consisting of a helicase (MTREX), an oligadenylate polymerase (TENT4B or TENT4A), and a substrate specific RNA-binding factor (ZCCHC7 or ZCCHC8). Several TRAMP-like complexes exist with specific compositions and are associated with nuclear, or nucleolar RNA exosomes. Identified in the spliceosome C complex. Component of the nuclear exosome targeting (NEXT) complex composed of MTREX, ZCCHC8, and RBM7 that directs a subset of non-coding short-lived RNAs for exosomal degradation. Interacts with proteins involved in RNA processing and degradation such as MTREX and RBM7; interaction with MTREX enhances MTREX RNA helicase activity and bridges between RBM7 and MTREX. Interacts with TERC, the telomerase RNA component. Phosphorylation at Thr-492 by GSK3 is triggered in cells entering mitosis; this phosphorylation is greatly enhanced by nocodazole treatment, but reduced by lithium.

The protein resides in the nucleus. It is found in the nucleoplasm. Functionally, scaffolding subunit of the trimeric nuclear exosome targeting (NEXT) complex that is involved in the surveillance and turnover of aberrant transcripts and non-coding RNAs. NEXT functions as an RNA exosome cofactor that directs a subset of non-coding short-lived RNAs for exosomal degradation. May be involved in pre-mRNA splicing. It is required for 3'-end maturation of telomerase RNA component (TERC), TERC 3'-end targeting to the nuclear RNA exosome, and for telomerase function. This chain is Zinc finger CCHC domain-containing protein 8 (ZCCHC8), found in Homo sapiens (Human).